The sequence spans 315 residues: Nucleotide-binding protein CGSHiEE_06315 (315 aa).

8–15 (GRSGAGKS) serves as a coordination point for ATP. 56–59 (DIRN) is a GTP binding site.

This sequence belongs to the RapZ-like family.

Displays ATPase and GTPase activities. This Haemophilus influenzae (strain PittEE) protein is Nucleotide-binding protein CGSHiEE_06315.